The following is a 481-amino-acid chain: (S)-N-methylcoclaurine 3'-hydroxylase isozyme 1 (481 aa).

Cys-423 contacts heme.

The protein belongs to the cytochrome P450 family. Heme serves as cofactor. In terms of tissue distribution, restricted to the parietal region of sieve elements adjacent or proximal to laticifers in roots, stems, leaves, carpels and hypocotyls.

It localises to the endoplasmic reticulum. The catalysed reaction is (S)-N-methylcoclaurine + reduced [NADPH--hemoprotein reductase] + O2 = (S)-3'-hydroxy-N-methylcoclaurine + oxidized [NADPH--hemoprotein reductase] + H2O + H(+). It functions in the pathway alkaloid biosynthesis; (S)-reticuline biosynthesis; (S)-reticuline from (S)-norcoclaurine: step 3/4. Its function is as follows. Cytochrome P450 monooxygenase involved in the biosynthesis of benzylisoquinoline alkaloids. Catalyzes the 3'-hydroxylation of (S)-N-methylcoclaurine. This chain is (S)-N-methylcoclaurine 3'-hydroxylase isozyme 1, found in Papaver somniferum (Opium poppy).